The chain runs to 241 residues: Probable phosphatase Cthe_0111 (241 aa).

Residues H8, H10, H16, H41, E74, H102, H132, D192, and H194 each coordinate Zn(2+).

Belongs to the PHP family. Zn(2+) serves as cofactor.

The sequence is that of Probable phosphatase Cthe_0111 from Acetivibrio thermocellus (strain ATCC 27405 / DSM 1237 / JCM 9322 / NBRC 103400 / NCIMB 10682 / NRRL B-4536 / VPI 7372) (Clostridium thermocellum).